The chain runs to 122 residues: uncharacterized protein (122 aa).

Residues Val79 to Arg114 are a coiled coil.

This is an uncharacterized protein from Archaeoglobus fulgidus (strain ATCC 49558 / DSM 4304 / JCM 9628 / NBRC 100126 / VC-16).